The primary structure comprises 371 residues: uncharacterized protein (371 aa).

This sequence to E.coli YcjY.

This is an uncharacterized protein from Pseudomonas aeruginosa (strain ATCC 15692 / DSM 22644 / CIP 104116 / JCM 14847 / LMG 12228 / 1C / PRS 101 / PAO1).